Here is a 126-residue protein sequence, read N- to C-terminus: Glycine cleavage system H protein (126 aa).

Residues 23–104 (TLTVGITDHA…PYDNWLFKIK (82 aa)) enclose the Lipoyl-binding domain. Position 64 is an N6-lipoyllysine (Lys-64).

This sequence belongs to the GcvH family. In terms of assembly, the glycine cleavage system is composed of four proteins: P, T, L and H. The cofactor is (R)-lipoate.

Its function is as follows. The glycine cleavage system catalyzes the degradation of glycine. The H protein shuttles the methylamine group of glycine from the P protein to the T protein. This is Glycine cleavage system H protein from Paraburkholderia phymatum (strain DSM 17167 / CIP 108236 / LMG 21445 / STM815) (Burkholderia phymatum).